Consider the following 309-residue polypeptide: Aurora kinase C (309 aa).

The segment at 1–33 (MSSPRAVVQLGKAQPAGEELATANQTAQQPSSP) is disordered. Positions 22-32 (TANQTAQQPSS) are enriched in polar residues. The Protein kinase domain occupies 43-293 (FEIGRPLGKG…LAQILKHPWV (251 aa)). ATP-binding positions include 49-57 (LGKGKFGNV) and K72. D166 functions as the Proton acceptor in the catalytic mechanism. T198 is subject to Phosphothreonine; by PKA. The segment at 292-309 (WVQAHSRRVLPPCAQMAS) is interaction with BIRC5.

It belongs to the protein kinase superfamily. Ser/Thr protein kinase family. Aurora subfamily. As to quaternary structure, component of the chromosomal passenger complex (CPC) composed of at least BIRC5/survivin, CDCA8/borealin, INCENP, AURKB or AURKC; predominantly independent AURKB- and AURKC-containing complexes exist; in the complex interacts directly with BIRC5/survivin and INCENP. Interacts with TACC1. In terms of tissue distribution, isoform 1 and isoform 2 are expressed in testis. Elevated expression levels were seen only in a subset of cancer cell lines such as Hep-G2, Huh-7 and HeLa. Expression is maximum at M phase.

It is found in the nucleus. Its subcellular location is the chromosome. It localises to the centromere. The protein localises to the cytoplasm. The protein resides in the cytoskeleton. It is found in the spindle. The enzyme catalyses L-seryl-[protein] + ATP = O-phospho-L-seryl-[protein] + ADP + H(+). It catalyses the reaction L-threonyl-[protein] + ATP = O-phospho-L-threonyl-[protein] + ADP + H(+). With respect to regulation, okadaic acid, an inhibitor of protein phosphatase 1 (PP1), protein phosphatase 2A (PP2A) and protein phosphatase 5 (PP5), increases AURKC activity. AURKC is also stabilized through its interaction with INCENP, which also acts as an activator. In terms of biological role, serine/threonine-protein kinase component of the chromosomal passenger complex (CPC), a complex that acts as a key regulator of mitosis. The CPC complex has essential functions at the centromere in ensuring correct chromosome alignment and segregation and is required for chromatin-induced microtubule stabilization and spindle assembly. Also plays a role in meiosis and more particularly in spermatogenesis. Has redundant cellular functions with AURKB and can rescue an AURKB knockdown. Like AURKB, AURKC phosphorylates histone H3 at 'Ser-10' and 'Ser-28'. AURKC phosphorylates the CPC complex subunits BIRC5/survivin and INCENP leading to increased AURKC activity. Phosphorylates TACC1, another protein involved in cell division, at 'Ser-228'. The sequence is that of Aurora kinase C (AURKC) from Homo sapiens (Human).